Here is a 540-residue protein sequence, read N- to C-terminus: Ipecac alkaloid beta-glucosidase 9 (540 aa).

A beta-D-glucoside is bound by residues glutamine 36, histidine 140, 185–186, tyrosine 350, glutamate 421, tryptophan 470, and phenylalanine 486; that span reads NE. Catalysis depends on glutamate 186, which acts as the Proton donor. The active-site Nucleophile is glutamate 421.

It belongs to the glycosyl hydrolase 1 family.

It localises to the cytoplasm. The protein resides in the cytosol. The catalysed reaction is deacetylipecoside + H2O = deacetylipecoside aglycone + D-glucose. It carries out the reaction deacetylisoipecoside + H2O = deacetylisoipecoside aglycone + D-glucose. It functions in the pathway alkaloid biosynthesis. Beta-glucosidase catalyzing deglucosylation on N-deacetylisoipecoside and N-deacetylipecoside. The polypeptide is Ipecac alkaloid beta-glucosidase 9 (Carapichea ipecacuanha (Ipecac)).